Here is a 372-residue protein sequence, read N- to C-terminus: MSATREREDGQDYRRIFLQDIPLIDVRAPVEFQQGAFANAVNLPLMNDDERQAVGTCYKQQGQQAAIALGHSLVNGRLREQRTAAWLAQCAQWPEGYIYCFRGGLRSQLVQQWLREAGVAYPRITGGYKALRNFLLTTLEQSAELPMVLIGGNTGSGKTLLVNELADGVDLEGAAHHRGSSFGRTLVSQSGQIDFENRLAVLLLKKQHGGCRRWVLEDEGRIIGSNNLPLPVFNRMQQAPVAVIDDPFEVRLARLQHEYIDRMRIEFEQAYGAQLGWQKYDEYLHHGLFAIRRRLGLERFQLLTQHLERALQYQQASGNSDEHQQWLVPLLQHYYDPMYHYQLEKKSQRIVFRGNYAEVREFLMTYSQNNGE.

Positions 17–140 (FLQDIPLIDV…LRNFLLTTLE (124 aa)) constitute a Rhodanese domain. Cys100 functions as the S-selanylcysteine intermediate in the catalytic mechanism.

This sequence belongs to the SelU family. In terms of assembly, monomer.

The enzyme catalyses 5-methylaminomethyl-2-thiouridine(34) in tRNA + selenophosphate + (2E)-geranyl diphosphate + H2O + H(+) = 5-methylaminomethyl-2-selenouridine(34) in tRNA + (2E)-thiogeraniol + phosphate + diphosphate. It carries out the reaction 5-methylaminomethyl-2-thiouridine(34) in tRNA + (2E)-geranyl diphosphate = 5-methylaminomethyl-S-(2E)-geranyl-thiouridine(34) in tRNA + diphosphate. The catalysed reaction is 5-methylaminomethyl-S-(2E)-geranyl-thiouridine(34) in tRNA + selenophosphate + H(+) = 5-methylaminomethyl-2-(Se-phospho)selenouridine(34) in tRNA + (2E)-thiogeraniol. It catalyses the reaction 5-methylaminomethyl-2-(Se-phospho)selenouridine(34) in tRNA + H2O = 5-methylaminomethyl-2-selenouridine(34) in tRNA + phosphate. Its function is as follows. Involved in the post-transcriptional modification of the uridine at the wobble position (U34) of tRNA(Lys), tRNA(Glu) and tRNA(Gln). Catalyzes the conversion of 2-thiouridine (S2U-RNA) to 2-selenouridine (Se2U-RNA). Acts in a two-step process involving geranylation of 2-thiouridine (S2U) to S-geranyl-2-thiouridine (geS2U) and subsequent selenation of the latter derivative to 2-selenouridine (Se2U) in the tRNA chain. This chain is tRNA 2-selenouridine synthase, found in Serratia proteamaculans (strain 568).